Here is a 728-residue protein sequence, read N- to C-terminus: Phosphoribosylformylglycinamidine synthase subunit PurL (728 aa).

H42 is an active-site residue. Residues Y45 and K84 each contribute to the ATP site. E86 serves as a coordination point for Mg(2+). Residues 87–90 (SHNH) and R109 contribute to the substrate site. H88 functions as the Proton acceptor in the catalytic mechanism. D110 is a Mg(2+) binding site. Residue Q237 coordinates substrate. D265 is a Mg(2+) binding site. Position 309–311 (309–311 (ESQ)) interacts with substrate. D491 and G528 together coordinate ATP. N529 serves as a coordination point for Mg(2+). Position 531 (S531) interacts with substrate.

Belongs to the FGAMS family. As to quaternary structure, monomer. Part of the FGAM synthase complex composed of 1 PurL, 1 PurQ and 2 PurS subunits.

It localises to the cytoplasm. The enzyme catalyses N(2)-formyl-N(1)-(5-phospho-beta-D-ribosyl)glycinamide + L-glutamine + ATP + H2O = 2-formamido-N(1)-(5-O-phospho-beta-D-ribosyl)acetamidine + L-glutamate + ADP + phosphate + H(+). It participates in purine metabolism; IMP biosynthesis via de novo pathway; 5-amino-1-(5-phospho-D-ribosyl)imidazole from N(2)-formyl-N(1)-(5-phospho-D-ribosyl)glycinamide: step 1/2. In terms of biological role, part of the phosphoribosylformylglycinamidine synthase complex involved in the purines biosynthetic pathway. Catalyzes the ATP-dependent conversion of formylglycinamide ribonucleotide (FGAR) and glutamine to yield formylglycinamidine ribonucleotide (FGAM) and glutamate. The FGAM synthase complex is composed of three subunits. PurQ produces an ammonia molecule by converting glutamine to glutamate. PurL transfers the ammonia molecule to FGAR to form FGAM in an ATP-dependent manner. PurS interacts with PurQ and PurL and is thought to assist in the transfer of the ammonia molecule from PurQ to PurL. This Campylobacter jejuni subsp. doylei (strain ATCC BAA-1458 / RM4099 / 269.97) protein is Phosphoribosylformylglycinamidine synthase subunit PurL.